The sequence spans 150 residues: Putative solute carrier family 19 member 4 (150 aa).

The disordered stretch occupies residues proline 118–aspartate 137. Residues alanine 124–glutamine 136 are compositionally biased toward basic and acidic residues.

Belongs to the reduced folate carrier (RFC) transporter (TC 2.A.48) family.

The chain is Putative solute carrier family 19 member 4 from Homo sapiens (Human).